Reading from the N-terminus, the 140-residue chain is L-fucose mutarotase (140 aa).

H22 serves as the catalytic Proton donor. Residues D30, R107, and 129 to 131 each bind substrate; that span reads YGN.

The protein belongs to the RbsD / FucU family. FucU mutarotase subfamily. In terms of assembly, homodecamer.

It localises to the cytoplasm. It carries out the reaction alpha-L-fucose = beta-L-fucose. It participates in carbohydrate metabolism; L-fucose metabolism. Involved in the anomeric conversion of L-fucose. The protein is L-fucose mutarotase of Klebsiella pneumoniae subsp. pneumoniae (strain ATCC 700721 / MGH 78578).